A 380-amino-acid polypeptide reads, in one-letter code: Cytochrome b (380 aa).

A run of 4 helical transmembrane segments spans residues 33–53 (FGSL…FLAM), 77–98 (WLIR…YLHI), 113–133 (WNVG…GYVL), and 178–198 (FFAF…LHLL). Heme b contacts are provided by His-83 and His-97. Heme b is bound by residues His-182 and His-196. Residue His-201 participates in a ubiquinone binding. 4 consecutive transmembrane segments (helical) span residues 226–246 (YKDL…ALFS), 288–308 (LGGV…PFLH), 320–340 (ASQF…WIGG), and 347–367 (FIII…VLFP).

The protein belongs to the cytochrome b family. In terms of assembly, the cytochrome bc1 complex contains 3 respiratory subunits (MT-CYB, CYC1 and UQCRFS1), 2 core proteins (UQCRC1 and UQCRC2) and probably 6 low-molecular weight proteins. Requires heme b as cofactor.

Its subcellular location is the mitochondrion inner membrane. Its function is as follows. Component of the ubiquinol-cytochrome c reductase complex (complex III or cytochrome b-c1 complex) that is part of the mitochondrial respiratory chain. The b-c1 complex mediates electron transfer from ubiquinol to cytochrome c. Contributes to the generation of a proton gradient across the mitochondrial membrane that is then used for ATP synthesis. The polypeptide is Cytochrome b (mt-cyb) (Scomber scombrus (Atlantic mackerel)).